A 367-amino-acid chain; its full sequence is GTP cyclohydrolase FolE2 (367 aa).

Belongs to the GTP cyclohydrolase IV family.

The enzyme catalyses GTP + H2O = 7,8-dihydroneopterin 3'-triphosphate + formate + H(+). Its pathway is cofactor biosynthesis; 7,8-dihydroneopterin triphosphate biosynthesis; 7,8-dihydroneopterin triphosphate from GTP: step 1/1. Its function is as follows. Converts GTP to 7,8-dihydroneopterin triphosphate. The polypeptide is GTP cyclohydrolase FolE2 (Ruegeria pomeroyi (strain ATCC 700808 / DSM 15171 / DSS-3) (Silicibacter pomeroyi)).